The following is a 122-amino-acid chain: Large ribosomal subunit protein uL14 (122 aa).

It belongs to the universal ribosomal protein uL14 family. Part of the 50S ribosomal subunit. Forms a cluster with proteins L3 and L19. In the 70S ribosome, L14 and L19 interact and together make contacts with the 16S rRNA in bridges B5 and B8.

Binds to 23S rRNA. Forms part of two intersubunit bridges in the 70S ribosome. The chain is Large ribosomal subunit protein uL14 from Leifsonia xyli subsp. xyli (strain CTCB07).